Reading from the N-terminus, the 622-residue chain is Histone-arginine methyltransferase CARMER (622 aa).

The SAM-dependent MTase PRMT-type domain maps to 118–425; sequence ASQYFQFYGY…QRQSYDVEID (308 aa). Residues Gln-131, Arg-140, Gly-164, Glu-186, Glu-215, and Thr-243 each coordinate S-adenosyl-L-methionine. Position 478 is an asymmetric dimethylarginine; by autocatalysis (Arg-478). Disordered stretches follow at residues 513 to 556 and 602 to 622; these read ANGG…QQQQ and QPILNSHHHHPGQPIHGNQFY. The segment covering 536 to 556 has biased composition (low complexity); sequence QQQQQQQQQQQQAAVGPQQQQ.

Belongs to the class I-like SAM-binding methyltransferase superfamily. Protein arginine N-methyltransferase family. As to quaternary structure, homodimer. The dimethylated protein is the major form.

It localises to the cytoplasm. The protein resides in the nucleus. It carries out the reaction L-arginyl-[protein] + 2 S-adenosyl-L-methionine = N(omega),N(omega)-dimethyl-L-arginyl-[protein] + 2 S-adenosyl-L-homocysteine + 2 H(+). Methylates (mono- and asymmetric dimethylation) the guanidino nitrogens of arginyl residues in proteins. May methylate histone H3 at 'Arg-17' and activate transcription via chromatin remodeling. The sequence is that of Histone-arginine methyltransferase CARMER from Anopheles gambiae (African malaria mosquito).